Reading from the N-terminus, the 79-residue chain is ATP synthase subunit c (79 aa).

The next 2 helical transmembrane spans lie at Ile-11–Leu-31 and Phe-53–Tyr-73.

It belongs to the ATPase C chain family. In terms of assembly, F-type ATPases have 2 components, F(1) - the catalytic core - and F(0) - the membrane proton channel. F(1) has five subunits: alpha(3), beta(3), gamma(1), delta(1), epsilon(1). F(0) has three main subunits: a(1), b(2) and c(10-14). The alpha and beta chains form an alternating ring which encloses part of the gamma chain. F(1) is attached to F(0) by a central stalk formed by the gamma and epsilon chains, while a peripheral stalk is formed by the delta and b chains.

It is found in the cell membrane. Its function is as follows. F(1)F(0) ATP synthase produces ATP from ADP in the presence of a proton or sodium gradient. F-type ATPases consist of two structural domains, F(1) containing the extramembraneous catalytic core and F(0) containing the membrane proton channel, linked together by a central stalk and a peripheral stalk. During catalysis, ATP synthesis in the catalytic domain of F(1) is coupled via a rotary mechanism of the central stalk subunits to proton translocation. In terms of biological role, key component of the F(0) channel; it plays a direct role in translocation across the membrane. A homomeric c-ring of between 10-14 subunits forms the central stalk rotor element with the F(1) delta and epsilon subunits. The protein is ATP synthase subunit c of Buchnera aphidicola subsp. Schizaphis graminum (strain Sg).